We begin with the raw amino-acid sequence, 315 residues long: MASLNKLSSNEIGNIDRQIAKLRQGQILTEQEVKSLCIKAKEILQDEPNIIQVRAPLTICGDIHGQFHDLIELFQIGGNLPDTNYLFLGDYVDRGSQSVETFSLMLSLKVRYKDRIVLLRGNHENREINKIYGFYDECFRKYGNEIVWKQFTEVFGYLPLSAIVEQQIFCAHGGLSPAMESVDQIKQLNRVQDIPHEGLMCDLLWSDPEETKNGWGISPRGAGWTWGCDITEKFLHSNKLKQIARAHQLVMEGIQKVHNQKTITIFSAPNYCYRCGNQACIVEVDEQLKMNQTQFEPAPRENEPHTTRRVPDYFL.

The Mn(2+) site is built by Asp-62, His-64, Asp-90, and Asn-122. His-123 serves as the catalytic Proton donor. Mn(2+)-binding residues include His-172 and His-247. Residues 294–315 (QFEPAPRENEPHTTRRVPDYFL) are disordered. A compositionally biased stretch (basic and acidic residues) spans 298–315 (APRENEPHTTRRVPDYFL). Position 315 is a leucine methyl ester (Leu-315).

The protein belongs to the PPP phosphatase family. PP-2A subfamily. The cofactor is Mn(2+). Post-translationally, reversibly methyl esterified on Leu-315 by leucine carboxyl methyltransferase 1 (PPM1) and protein phosphatase methylesterase 1 (PPE1). Carboxyl methylation influences the affinity of the catalytic subunit for the different regulatory subunits, thereby modulating the PP2A holoenzyme's substrate specificity, enzyme activity and cellular localization.

The enzyme catalyses O-phospho-L-seryl-[protein] + H2O = L-seryl-[protein] + phosphate. It carries out the reaction O-phospho-L-threonyl-[protein] + H2O = L-threonyl-[protein] + phosphate. This Paramecium tetraurelia protein is Serine/threonine-protein phosphatase PP2A catalytic subunit 2 (Ppn2).